The sequence spans 399 residues: Elongation factor Tu (399 aa).

The region spanning 10–208 (KPHVNIGTIG…TVDSYIPEPE (199 aa)) is the tr-type G domain. Residues 19–26 (GHVDHGKT) are G1. 19-26 (GHVDHGKT) contacts GTP. T26 serves as a coordination point for Mg(2+). Residues 64 to 68 (GITIN) are G2. The segment at 85–88 (DAPG) is G3. GTP contacts are provided by residues 85–89 (DAPGH) and 140–143 (NKVD). The interval 140–143 (NKVD) is G4. The interval 178 to 180 (SAL) is G5.

The protein belongs to the TRAFAC class translation factor GTPase superfamily. Classic translation factor GTPase family. EF-Tu/EF-1A subfamily. Monomer.

The protein resides in the cytoplasm. The catalysed reaction is GTP + H2O = GDP + phosphate + H(+). In terms of biological role, GTP hydrolase that promotes the GTP-dependent binding of aminoacyl-tRNA to the A-site of ribosomes during protein biosynthesis. In Streptococcus pyogenes serotype M12 (strain MGAS2096), this protein is Elongation factor Tu.